A 198-amino-acid polypeptide reads, in one-letter code: Dual specificity protein phosphatase 14 (198 aa).

Residues 26 to 167 (GIAQITSSLF…LIDYERQLFG (142 aa)) form the Tyrosine-protein phosphatase domain. C111 acts as the Phosphocysteine intermediate in catalysis.

The protein belongs to the protein-tyrosine phosphatase family. Non-receptor class dual specificity subfamily. Interacts with CD28.

It carries out the reaction O-phospho-L-tyrosyl-[protein] + H2O = L-tyrosyl-[protein] + phosphate. The enzyme catalyses O-phospho-L-seryl-[protein] + H2O = L-seryl-[protein] + phosphate. It catalyses the reaction O-phospho-L-threonyl-[protein] + H2O = L-threonyl-[protein] + phosphate. In terms of biological role, involved in the inactivation of MAP kinases. Dephosphorylates ERK, JNK and p38 MAP-kinases. Plays a negative role in TCR signaling by dephosphorylating MAP3K7 adapter TAB1 leading to its inactivation. The chain is Dual specificity protein phosphatase 14 (DUSP14) from Homo sapiens (Human).